Consider the following 42-residue polypeptide: Beta-defensin 13 (42 aa).

3 disulfides stabilise this stretch: C9–C38, C16–C31, and C21–C39.

It belongs to the beta-defensin family. In terms of tissue distribution, neutrophilic granules.

It localises to the secreted. In terms of biological role, has bactericidal activity. Active against E.coli ML35 and S.aureus 502A. This Bos taurus (Bovine) protein is Beta-defensin 13 (DEFB13).